Consider the following 443-residue polypeptide: ATP-dependent protease ATPase subunit HslU (443 aa).

ATP is bound by residues Ile18, 60-65, Asp256, Glu321, and Arg393; that span reads GVGKTE.

This sequence belongs to the ClpX chaperone family. HslU subfamily. In terms of assembly, a double ring-shaped homohexamer of HslV is capped on each side by a ring-shaped HslU homohexamer. The assembly of the HslU/HslV complex is dependent on binding of ATP.

It localises to the cytoplasm. Its function is as follows. ATPase subunit of a proteasome-like degradation complex; this subunit has chaperone activity. The binding of ATP and its subsequent hydrolysis by HslU are essential for unfolding of protein substrates subsequently hydrolyzed by HslV. HslU recognizes the N-terminal part of its protein substrates and unfolds these before they are guided to HslV for hydrolysis. This chain is ATP-dependent protease ATPase subunit HslU, found in Salmonella agona (strain SL483).